The sequence spans 179 residues: Bifunctional protein PyrR (179 aa).

The short motif at 99–111 (VILVDDVLYTGRT) is the PRPP-binding element.

It belongs to the purine/pyrimidine phosphoribosyltransferase family. PyrR subfamily. In terms of assembly, homodimer and homohexamer; in equilibrium.

It carries out the reaction UMP + diphosphate = 5-phospho-alpha-D-ribose 1-diphosphate + uracil. In terms of biological role, regulates transcriptional attenuation of the pyrimidine nucleotide (pyr) operon by binding in a uridine-dependent manner to specific sites on pyr mRNA. This disrupts an antiterminator hairpin in the RNA and favors formation of a downstream transcription terminator, leading to a reduced expression of downstream genes. Its function is as follows. Also displays a weak uracil phosphoribosyltransferase activity which is not physiologically significant. The protein is Bifunctional protein PyrR of Limosilactobacillus fermentum (strain NBRC 3956 / LMG 18251) (Lactobacillus fermentum).